The sequence spans 323 residues: Digestive cysteine proteinase 2 (323 aa).

Positions 1-16 (MKVAVLFLCGVALAAA) are cleaved as a signal peptide. Residues 17–107 (SPSWEHFKGK…FYPKKETGPQ (91 aa)) constitute a propeptide, activation peptide. Disulfide bonds link cysteine 128–cysteine 171, cysteine 162–cysteine 204, and cysteine 263–cysteine 312. The active site involves cysteine 131. Active-site residues include histidine 270 and asparagine 290.

Belongs to the peptidase C1 family.

With respect to regulation, inhibited by E-64, antipain, leupeptin, heavy metal ions, iodoacetic acid, dithionitrobenzene, p-hydroxymercuri-benzoate; activated by mercaptoethanol and dithiothreitol. The sequence is that of Digestive cysteine proteinase 2 (LCP2) from Homarus americanus (American lobster).